A 266-amino-acid chain; its full sequence is Undecaprenyl-diphosphatase (266 aa).

7 consecutive transmembrane segments (helical) span residues 39–59, 86–106, 112–132, 153–173, 189–209, 216–236, and 246–266; these read PGSS…VWYF, SIFI…LFVP, VLRS…FMYL, LIGF…GITI, FSFL…FIFS, IGFL…LLAI, and NGLK…LLNL.

Belongs to the UppP family.

The protein localises to the cell inner membrane. The enzyme catalyses di-trans,octa-cis-undecaprenyl diphosphate + H2O = di-trans,octa-cis-undecaprenyl phosphate + phosphate + H(+). In terms of biological role, catalyzes the dephosphorylation of undecaprenyl diphosphate (UPP). Confers resistance to bacitracin. This Prochlorococcus marinus (strain MIT 9215) protein is Undecaprenyl-diphosphatase.